The chain runs to 331 residues: Glyceraldehyde-3-phosphate dehydrogenase, cytosolic (331 aa).

NAD(+) contacts are provided by residues 12-13, Asp-34, and Arg-78; that span reads RI. D-glyceraldehyde 3-phosphate is bound by residues 149-151, Thr-180, 209-210, and Arg-232; these read SCT and TG. The active-site Nucleophile is the Cys-150. Asn-314 provides a ligand contact to NAD(+).

This sequence belongs to the glyceraldehyde-3-phosphate dehydrogenase family. In terms of assembly, homotetramer.

It localises to the cytoplasm. The enzyme catalyses D-glyceraldehyde 3-phosphate + phosphate + NAD(+) = (2R)-3-phospho-glyceroyl phosphate + NADH + H(+). Its pathway is carbohydrate degradation; glycolysis; pyruvate from D-glyceraldehyde 3-phosphate: step 1/5. This Trypanosoma brucei brucei protein is Glyceraldehyde-3-phosphate dehydrogenase, cytosolic.